The sequence spans 93 residues: Integration host factor subunit beta (93 aa).

It belongs to the bacterial histone-like protein family. As to quaternary structure, heterodimer of an alpha and a beta chain.

In terms of biological role, this protein is one of the two subunits of integration host factor, a specific DNA-binding protein that functions in genetic recombination as well as in transcriptional and translational control. The protein is Integration host factor subunit beta of Idiomarina loihiensis (strain ATCC BAA-735 / DSM 15497 / L2-TR).